Reading from the N-terminus, the 500-residue chain is Protein gar2 (500 aa).

Basic and acidic residues-rich tracts occupy residues methionine 1–alanine 41 and lysine 59–lysine 68. A disordered region spans residues methionine 1–threonine 262. Residues lysine 69–lysine 78 show a composition bias toward basic residues. The segment covering glutamate 90–serine 120 has biased composition (low complexity). A compositionally biased stretch (basic and acidic residues) spans valine 126–serine 137. 3 positions are modified to phosphoserine: serine 143, serine 144, and serine 146. The segment covering alanine 152 to serine 163 has biased composition (basic and acidic residues). Residues serine 164–serine 182 are compositionally biased toward low complexity. Over residues valine 191–serine 201 the composition is skewed to basic and acidic residues. A compositionally biased stretch (low complexity) spans serine 202 to serine 218. Residues glycine 219–serine 233 show a composition bias toward acidic residues. A compositionally biased stretch (basic and acidic residues) spans glutamate 234–alanine 250. 2 RRM domains span residues cysteine 263–proline 341 and aspartate 366–proline 443. The disordered stretch occupies residues serine 441–aspartate 500. Residues threonine 445–arginine 480 are compositionally biased toward gly residues.

This sequence belongs to the RRM GAR family.

It is found in the nucleus. The protein localises to the nucleolus. Functionally, helps the assembly of pre-ribosomal particles containing 18S rRNA. This Schizosaccharomyces pombe (strain 972 / ATCC 24843) (Fission yeast) protein is Protein gar2 (gar2).